The chain runs to 341 residues: Methionine import ATP-binding protein MetN (341 aa).

An ABC transporter domain is found at Ile2–Tyr237. ATP is bound at residue Gly34–Ser41.

It belongs to the ABC transporter superfamily. Methionine importer (TC 3.A.1.24) family. In terms of assembly, the complex is composed of two ATP-binding proteins (MetN), two transmembrane proteins (MetI) and a solute-binding protein (MetQ).

The protein localises to the cell inner membrane. It catalyses the reaction L-methionine(out) + ATP + H2O = L-methionine(in) + ADP + phosphate + H(+). The enzyme catalyses D-methionine(out) + ATP + H2O = D-methionine(in) + ADP + phosphate + H(+). Functionally, part of the ABC transporter complex MetNIQ involved in methionine import. Responsible for energy coupling to the transport system. The sequence is that of Methionine import ATP-binding protein MetN from Legionella pneumophila (strain Paris).